Here is a 329-residue protein sequence, read N- to C-terminus: Caveolae-associated protein 4a (329 aa).

Disordered stretches follow at residues 198-260 (SKEN…NIAK) and 274-329 (KERT…IHED). Positions 198–262 (SKENMNKTRE…RLKENIAKKA (65 aa)) form a coiled coil. Residues 201-220 (NMNKTREKTRENLSKTKESL) are compositionally biased toward basic and acidic residues. Positions 221 to 232 (SKTGQTLGTKFN) are enriched in polar residues. Residues 242–260 (EQREKIKQSSERLKENIAK) are compositionally biased toward basic and acidic residues. Low complexity predominate over residues 279–290 (AEGQEGAEAEPA). Phosphothreonine is present on T292. Residues 310–329 (TENKREGPVSEEGATRIHED) show a composition bias toward basic and acidic residues.

The protein belongs to the CAVIN family.

Its subcellular location is the cytoplasm. The protein resides in the myofibril. It localises to the sarcomere. It is found in the membrane. The protein localises to the caveola. Induces rhoa activation and activates nppa transcription and myofibrillar organization through the rho/rock signaling pathway. The protein is Caveolae-associated protein 4a (cavin4a) of Danio rerio (Zebrafish).